An 836-amino-acid polypeptide reads, in one-letter code: Conserved oligomeric Golgi complex subunit 7 (836 aa).

2 coiled-coil regions span residues 29 to 49 (QDSLEKHLVDLEMKLQIASEE) and 107 to 127 (LARVDNVKQRMEAAYKTLQDA). Residues 246–265 (KLANERSESQRLSSGDEFQS) are disordered.

It belongs to the COG7 family. Component of the conserved oligomeric Golgi complex which is composed of eight different subunits and is required for normal Golgi morphology and localization. Interacts with COG5 and COG6.

The protein resides in the golgi apparatus membrane. Functionally, required for normal Golgi function. Necessary for embryo development and pigmentation, especially for the expansion of cells and organs, and for the formation of the organized shoot apical meristem (SAM). Probably involved in the generation of the extra-cellular matrix. This Arabidopsis thaliana (Mouse-ear cress) protein is Conserved oligomeric Golgi complex subunit 7.